The sequence spans 141 residues: Large ribosomal subunit protein uL11 (141 aa).

The protein belongs to the universal ribosomal protein uL11 family. As to quaternary structure, part of the ribosomal stalk of the 50S ribosomal subunit. Interacts with L10 and the large rRNA to form the base of the stalk. L10 forms an elongated spine to which L12 dimers bind in a sequential fashion forming a multimeric L10(L12)X complex. One or more lysine residues are methylated.

Functionally, forms part of the ribosomal stalk which helps the ribosome interact with GTP-bound translation factors. The chain is Large ribosomal subunit protein uL11 from Prochlorococcus marinus (strain MIT 9515).